The chain runs to 267 residues: MSWNDDDVFAGSANNDDVVLMDSWDAEEPIMESWDAEETPAKKETSPKPDSKKNAKKDSKKDKKSSTDQVLLEIDVLDEKTRKELLKKAELESDLNNAAELFGSLGVAEEHPRARALRKEQEVADAMRPAAFTKDTPIESHPLFNGESKKDYQDLRKALATAIVTMNEKSSLNYSSSLAIDLIRDVAKPMSIESIRQSIATLNVLMKDKEREERRARLAKVKGGTATGGAGKKKAKAKTNLGGAFKKDQEFDMGVDTYEDFGDDDFM.

Residues 1–70 (MSWNDDDVFA…KDKKSSTDQV (70 aa)) form a disordered region. The segment covering 24-38 (WDAEEPIMESWDAEE) has biased composition (acidic residues). Positions 39 to 66 (TPAKKETSPKPDSKKNAKKDSKKDKKSS) are enriched in basic and acidic residues. Residues 192–220 (IESIRQSIATLNVLMKDKEREERRARLAK) are a coiled coil.

Belongs to the eIF-3 subunit J family. Component of the eukaryotic translation initiation factor 3 (eIF-3) complex.

The protein localises to the cytoplasm. In terms of biological role, component of the eukaryotic translation initiation factor 3 (eIF-3) complex, which is involved in protein synthesis of a specialized repertoire of mRNAs and, together with other initiation factors, stimulates binding of mRNA and methionyl-tRNAi to the 40S ribosome. The eIF-3 complex specifically targets and initiates translation of a subset of mRNAs involved in cell proliferation. This is Eukaryotic translation initiation factor 3 subunit J from Vanderwaltozyma polyspora (strain ATCC 22028 / DSM 70294 / BCRC 21397 / CBS 2163 / NBRC 10782 / NRRL Y-8283 / UCD 57-17) (Kluyveromyces polysporus).